A 520-amino-acid polypeptide reads, in one-letter code: Cobyric acid synthase (520 aa).

The region spanning 254-465 (ELDIAVVRLP…IHGILDNDGL (212 aa)) is the GATase cobBQ-type domain. Cys335 functions as the Nucleophile in the catalytic mechanism. Residue His457 is part of the active site.

It belongs to the CobB/CobQ family. CobQ subfamily.

The protein operates within cofactor biosynthesis; adenosylcobalamin biosynthesis. Catalyzes amidations at positions B, D, E, and G on adenosylcobyrinic A,C-diamide. NH(2) groups are provided by glutamine, and one molecule of ATP is hydrogenolyzed for each amidation. This Sorangium cellulosum (strain So ce56) (Polyangium cellulosum (strain So ce56)) protein is Cobyric acid synthase.